A 121-amino-acid polypeptide reads, in one-letter code: Large ribosomal subunit protein uL14 (121 aa).

The protein belongs to the universal ribosomal protein uL14 family. As to quaternary structure, part of the 50S ribosomal subunit. Forms a cluster with proteins L3 and L19. In the 70S ribosome, L14 and L19 interact and together make contacts with the 16S rRNA in bridges B5 and B8.

Its function is as follows. Binds to 23S rRNA. Forms part of two intersubunit bridges in the 70S ribosome. This chain is Large ribosomal subunit protein uL14, found in Synechococcus elongatus (strain ATCC 33912 / PCC 7942 / FACHB-805) (Anacystis nidulans R2).